The sequence spans 168 residues: Prolyl-tRNA synthetase associated domain-containing protein 1 (168 aa).

The protein belongs to the PRORSD1 family.

The chain is Prolyl-tRNA synthetase associated domain-containing protein 1 (prorsd1p) from Xenopus laevis (African clawed frog).